Here is a 243-residue protein sequence, read N- to C-terminus: MSTAITRQIVLDTETTGMNQIGAHYEGHKIIEIGAVEVVNRRLTGNNFHVYLKPDRLVDPEAFGVHGIADEFLLDKPTFAEVADEFMDYIRGAELVIHNAAFDIGFMDYEFSLLKRDIPKTNTFCKVTDSLAVARKMFPGKRNSLDALCARYEIDNSKRTLHGALLDAQILAEVYLAMTGGQTSMAFAMEGETQQQQGEATIQRIVRQASKLRVVFATDEEIAAHEARLDLVQKKGGSCLWRA.

A divalent metal cation-binding residues include Asp-12 and Glu-14. Asp-12, Glu-14, Glu-61, and His-66 together coordinate substrate. The Proton acceptor role is filled by His-162. A divalent metal cation is bound at residue Asp-167. Substrate is bound at residue Asp-167.

As to quaternary structure, in a ternary complex this subunit contacts both the beta sliding clamp (dnaN) and the polymerase subunit (dnaE). The DNA polymerase III holoenzyme complex contains at least 10 different subunits organized into 3 functionally essential subassemblies: the Pol III core, the beta sliding clamp processivity factor and the clamp-loading complex. The Pol III core (subunits alpha, epsilon and theta) contains the polymerase and the 3'-5' exonuclease proofreading activities. The polymerase is tethered to the template via the dimeric beta sliding clamp processivity factor. The clamp loader (also called gamma complex) assembles the beta sliding clamp onto the primed template and plays a central role in the organization and communication at the replication fork. The clamp-loading complex contains delta, delta', psi and chi, and 3 copies of either or both of two different DnaX proteins, gamma and tau. The DNA replisome complex has a single clamp loader (3 tau and 1 each of delta, delta', psi and chi subunits) which binds 3 Pol III cores (1 core on the leading strand and 2 on the lagging strand) each with a beta sliding clamp dimer. Additional proteins in the replisome are other copies of gamma, psi and chi, Ssb, DNA helicase and RNA primase. Mg(2+) is required as a cofactor. Mn(2+) serves as cofactor.

The catalysed reaction is DNA(n) + a 2'-deoxyribonucleoside 5'-triphosphate = DNA(n+1) + diphosphate. Its function is as follows. DNA polymerase III is a complex, multichain enzyme responsible for most of the replicative synthesis in bacteria. The epsilon subunit contain the editing function and is a proofreading 3'-5' exonuclease. Contacts both the beta sliding clamp (dnaN) and the polymerase subunit (dnaE), stabilizing their interaction. This chain is DNA polymerase III subunit epsilon (dnaQ), found in Escherichia coli (strain K12).